A 267-amino-acid chain; its full sequence is uncharacterized protein (267 aa).

Residues 37–62 (DSSNNYKKKYKKYKRKYIDLKKQLNY) adopt a coiled-coil conformation.

This is an uncharacterized protein from Acanthamoeba polyphaga (Amoeba).